We begin with the raw amino-acid sequence, 451 residues long: ATP-dependent protease ATPase subunit HslU (451 aa).

ATP-binding positions include Ile26, 68–73, Asp263, Glu328, and Arg400; that span reads GVGKTE.

The protein belongs to the ClpX chaperone family. HslU subfamily. In terms of assembly, a double ring-shaped homohexamer of HslV is capped on each side by a ring-shaped HslU homohexamer. The assembly of the HslU/HslV complex is dependent on binding of ATP.

The protein resides in the cytoplasm. Functionally, ATPase subunit of a proteasome-like degradation complex; this subunit has chaperone activity. The binding of ATP and its subsequent hydrolysis by HslU are essential for unfolding of protein substrates subsequently hydrolyzed by HslV. HslU recognizes the N-terminal part of its protein substrates and unfolds these before they are guided to HslV for hydrolysis. This is ATP-dependent protease ATPase subunit HslU from Dichelobacter nodosus (strain VCS1703A).